Consider the following 92-residue polypeptide: Defensin-like protein 294 (92 aa).

Positions 1 to 26 are cleaved as a signal peptide; that stretch reads MASRATSLFIFFFLISCTFMLLETNA. 3 cysteine pairs are disulfide-bonded: Cys-63-Cys-82, Cys-69-Cys-87, and Cys-75-Cys-89.

The protein belongs to the DEFL family.

It is found in the secreted. This is Defensin-like protein 294 from Arabidopsis thaliana (Mouse-ear cress).